Reading from the N-terminus, the 180-residue chain is Large ribosomal subunit protein uL5 (180 aa).

It belongs to the universal ribosomal protein uL5 family. Part of the 50S ribosomal subunit; part of the 5S rRNA/L5/L18/L25 subcomplex. Contacts the 5S rRNA and the P site tRNA. Forms a bridge to the 30S subunit in the 70S ribosome.

Its function is as follows. This is one of the proteins that bind and probably mediate the attachment of the 5S RNA into the large ribosomal subunit, where it forms part of the central protuberance. In the 70S ribosome it contacts protein S13 of the 30S subunit (bridge B1b), connecting the 2 subunits; this bridge is implicated in subunit movement. Contacts the P site tRNA; the 5S rRNA and some of its associated proteins might help stabilize positioning of ribosome-bound tRNAs. This Chloroflexus aurantiacus (strain ATCC 29364 / DSM 637 / Y-400-fl) protein is Large ribosomal subunit protein uL5.